A 312-amino-acid polypeptide reads, in one-letter code: MIIVTGGAGFIGSNIVKALNDEGYKDILVVDNLKDGTKFINLADLDIADYMDKEEFIASILAGDDFGDIDAIFHEGACSSTTEWDGKYMMDNNYQYSKELLHYCLERRTPFLYASSAATYGGRTDNFIEERQYEKPLNVYGYSKFLFDQYVREILPQADSQICGFRYFNVYGPREGHKGSMASVAFHLNNQINQRQNPKLFAGSEGFQRDFIYVGDAAAVNLWFWKNGVSGIYNCGTGRAESFQAVADAVVECHKDKSLTVEHIDFPEHLKGRYQRFTQADLTKLRAAGYDKPFKTVAEGVTEYMHWLNQDK.

NADP(+) is bound by residues Phe-10–Ile-11, Asp-31–Asn-32, Lys-38, Lys-53, Glu-75–Ser-79, and Asn-92. The Proton acceptor role is filled by Tyr-140. Lys-144 contacts NADP(+). Substrate is bound at residue Asn-169. Residues Val-170 and Lys-178 each coordinate NADP(+). Lys-178 serves as the catalytic Proton acceptor. Residues Ser-180, His-187, Phe-201–Ser-204, Arg-209, and Tyr-274 each bind substrate.

It belongs to the NAD(P)-dependent epimerase/dehydratase family. HldD subfamily. Homopentamer. It depends on NADP(+) as a cofactor.

The catalysed reaction is ADP-D-glycero-beta-D-manno-heptose = ADP-L-glycero-beta-D-manno-heptose. Its pathway is nucleotide-sugar biosynthesis; ADP-L-glycero-beta-D-manno-heptose biosynthesis; ADP-L-glycero-beta-D-manno-heptose from D-glycero-beta-D-manno-heptose 7-phosphate: step 4/4. It functions in the pathway bacterial outer membrane biogenesis; LPS core biosynthesis. Catalyzes the interconversion between ADP-D-glycero-beta-D-manno-heptose and ADP-L-glycero-beta-D-manno-heptose via an epimerization at carbon 6 of the heptose. The chain is ADP-L-glycero-D-manno-heptose-6-epimerase from Photorhabdus laumondii subsp. laumondii (strain DSM 15139 / CIP 105565 / TT01) (Photorhabdus luminescens subsp. laumondii).